The following is a 55-amino-acid chain: Large ribosomal subunit protein bL33 (55 aa).

It belongs to the bacterial ribosomal protein bL33 family.

The protein is Large ribosomal subunit protein bL33 of Escherichia coli (strain K12 / DH10B).